The primary structure comprises 138 residues: Large ribosomal subunit protein uL16 (138 aa).

Basic residues predominate over residues 1 to 13; it reads MLQPARRKFRKEQ. Positions 1–22 are disordered; it reads MLQPARRKFRKEQKGRNTGVAT.

Belongs to the universal ribosomal protein uL16 family. Part of the 50S ribosomal subunit.

Its function is as follows. Binds 23S rRNA and is also seen to make contacts with the A and possibly P site tRNAs. This is Large ribosomal subunit protein uL16 from Acidovorax ebreus (strain TPSY) (Diaphorobacter sp. (strain TPSY)).